The chain runs to 525 residues: Vanin-like protein 2 (525 aa).

The N-terminal stretch at 1–27 is a signal peptide; it reads MAKNYWGFFLFCLALGLMLNLSQQASL. N-linked (GlcNAc...) asparagine glycans are attached at residues Asn20 and Asn61. In terms of domain architecture, CN hydrolase spans 33 to 303; it reads YTAGVVEFEP…RSIYVARVPK (271 aa). Glu72 acts as the Proton acceptor in catalysis. Asn99, Asn116, and Asn124 each carry an N-linked (GlcNAc...) asparagine glycan. Residue Lys167 is the Proton donor of the active site. An N-linked (GlcNAc...) asparagine glycan is attached at Asn176. Cys199 serves as the catalytic Nucleophile. 3 N-linked (GlcNAc...) asparagine glycosylation sites follow: Asn333, Asn348, and Asn375.

The protein belongs to the carbon-nitrogen hydrolase superfamily. BTD/VNN family. In terms of tissue distribution, expressed in third instar larvae.

The protein resides in the secreted. The polypeptide is Vanin-like protein 2 (Drosophila melanogaster (Fruit fly)).